A 490-amino-acid polypeptide reads, in one-letter code: ATP synthase subunit beta, chloroplastic (490 aa).

Residue 170–177 participates in ATP binding; it reads GGAGVGKT.

This sequence belongs to the ATPase alpha/beta chains family. As to quaternary structure, F-type ATPases have 2 components, CF(1) - the catalytic core - and CF(0) - the membrane proton channel. CF(1) has five subunits: alpha(3), beta(3), gamma(1), delta(1), epsilon(1). CF(0) has four main subunits: a(1), b(1), b'(1) and c(9-12).

The protein resides in the plastid. It localises to the chloroplast thylakoid membrane. The enzyme catalyses ATP + H2O + 4 H(+)(in) = ADP + phosphate + 5 H(+)(out). In terms of biological role, produces ATP from ADP in the presence of a proton gradient across the membrane. The catalytic sites are hosted primarily by the beta subunits. The protein is ATP synthase subunit beta, chloroplastic of Ipomoea quamoclit (Cypress vine).